A 279-amino-acid polypeptide reads, in one-letter code: Urease accessory protein UreD (279 aa).

The protein belongs to the UreD family. As to quaternary structure, ureD, UreF and UreG form a complex that acts as a GTP-hydrolysis-dependent molecular chaperone, activating the urease apoprotein by helping to assemble the nickel containing metallocenter of UreC. The UreE protein probably delivers the nickel.

It localises to the cytoplasm. In terms of biological role, required for maturation of urease via the functional incorporation of the urease nickel metallocenter. The sequence is that of Urease accessory protein UreD from Pseudomonas fluorescens (strain ATCC BAA-477 / NRRL B-23932 / Pf-5).